A 318-amino-acid chain; its full sequence is MIDLSPLVRRLAGTPLACWSQGLQAQLQAKLEKGHGDLERWRGALDALPALLPSEIDLVDGLRLDCDCDDGTRAQMRQALMGLSPWRKGPFDLFGVHVDTEWRSDWKWSRVAPHLDLQGKRVLDVGCGNGYYQWRMLGAGADMVIGVDPNWLFFCQFQAVQRYLPDLPAWHLPFALEELPANLEGFDTVFSMGVFYHRRSPIEHLLALKDCLVKGGELVLETLVVEGDEQQVLVPEDRYAQMRNVWYLPSVPALERWLRRAGFSDVRCVDVSVTSVEEQRSTEWMRYQSLGDFLDPNDHSKTIEGLPAPRRATLLARK.

Carboxy-S-adenosyl-L-methionine-binding positions include lysine 88, tryptophan 102, lysine 107, glycine 126, 176-177 (LE), methionine 192, tyrosine 196, and arginine 311.

The protein belongs to the class I-like SAM-binding methyltransferase superfamily. CmoB family. As to quaternary structure, homotetramer.

The catalysed reaction is carboxy-S-adenosyl-L-methionine + 5-hydroxyuridine(34) in tRNA = 5-carboxymethoxyuridine(34) in tRNA + S-adenosyl-L-homocysteine + H(+). Catalyzes carboxymethyl transfer from carboxy-S-adenosyl-L-methionine (Cx-SAM) to 5-hydroxyuridine (ho5U) to form 5-carboxymethoxyuridine (cmo5U) at position 34 in tRNAs. This Pseudomonas putida (strain W619) protein is tRNA U34 carboxymethyltransferase.